The chain runs to 362 residues: Atypical chemokine receptor 3 (362 aa).

Topologically, residues 1–47 are extracellular; sequence MDVHLFDYVEPGNYSDINWPCNSSDCIVVDTVQCPAMPNKNVLLYTL. N-linked (GlcNAc...) asparagine glycans are attached at residues Asn13 and Asn22. A helical transmembrane segment spans residues 48–68; that stretch reads SFIYIFIFVIGMIANSVVVWV. Over 69–81 the chain is Cytoplasmic; sequence NIQAKTTGYDTHC. A helical transmembrane segment spans residues 82-102; sequence YILNLAIADLWVVITIPVWVV. Residues 103–118 are Extracellular-facing; it reads SLVQHNQWPMGELTCK. A disulfide bridge connects residues Cys117 and Cys196. A helical membrane pass occupies residues 119–139; the sequence is ITHLIFSINLFGSIFFLACMS. Over 140-162 the chain is Cytoplasmic; sequence VDRYLSITYFTSTSSYKKKMVRR. A helical transmembrane segment spans residues 163-183; sequence VVCVLVWLLAFFVSLPDTYYL. The Extracellular segment spans residues 184 to 213; that stretch reads KTVTSASNNETYCRSFYPEHSIKEWLIGME. A helical membrane pass occupies residues 214–234; that stretch reads LVSVILGFAVPFTIIAIFYFL. Residues 235 to 252 are Cytoplasmic-facing; that stretch reads LARAMSASGDQEKHSSRK. A helical transmembrane segment spans residues 253-273; that stretch reads IIFSYVVVFLVCWLPYHFVVL. Residues 274-296 are Extracellular-facing; it reads LDIFSILHYIPFTCQLENVLFTA. A helical transmembrane segment spans residues 297 to 319; the sequence is LHVTQCLSLVHCCVNPVLYSFIN. Residues 320–362 are Cytoplasmic-facing; it reads RNYRYELMKAFIFKYSAKTGLTKLIDASRVSETEYSALEQNTK. A C-terminal cytoplasmic tail region spans residues 324–362; the sequence is YELMKAFIFKYSAKTGLTKLIDASRVSETEYSALEQNTK. Phosphoserine is present on residues Ser347, Ser350, and Ser355.

Belongs to the G-protein coupled receptor 1 family. Atypical chemokine receptor subfamily. Homodimer. Can form heterodimers with CXCR4; heterodimerization may regulate CXCR4 signaling activity. Interacts with ARRB1 and ARRB2. The Ser/Thr residues in the C-terminal cytoplasmic tail may be phosphorylated. Post-translationally, ubiquitinated at the Lys residues in its C-terminal cytoplasmic tail and is essential for correct trafficking from and to the cell membrane. Deubiquitinated by CXCL12-stimulation in a reversible manner. Expressed in vascular smooth muscle cells (at protein level). In brain, expressed in blood vessels, pyramidal cells in hippocampal subfield CA3, mature dentate gyrus granule cells, ventricle walls, olfactory bulb, accumbens shell, supraoptic, lateroanterior and ventromedial hypothalamic nuclei, medial region of thalamus, and motor nuclei, central gray and raphe magnus nucleus of brain stem. Detected in primary neurons, GABAergic neurons, astrocytes, cerebral cortex, ventral striatum and choroid plexus. Not detected in mesencephalon.

Its subcellular location is the cell membrane. It localises to the early endosome. It is found in the recycling endosome. Atypical chemokine receptor that controls chemokine levels and localization via high-affinity chemokine binding that is uncoupled from classic ligand-driven signal transduction cascades, resulting instead in chemokine sequestration, degradation, or transcytosis. Also known as interceptor (internalizing receptor) or chemokine-scavenging receptor or chemokine decoy receptor. Acts as a receptor for chemokines CXCL11 and CXCL12/SDF1. Chemokine binding does not activate G-protein-mediated signal transduction but instead induces beta-arrestin recruitment, leading to ligand internalization and activation of MAPK signaling pathway. Required for regulation of CXCR4 protein levels in migrating interneurons, thereby adapting their chemokine responsiveness. In glioma cells, transduces signals via MEK/ERK pathway, mediating resistance to apoptosis. Promotes cell growth and survival. Not involved in cell migration, adhesion or proliferation of normal hematopoietic progenitors but activated by CXCL11 in malignant hemapoietic cells, leading to phosphorylation of ERK1/2 (MAPK3/MAPK1) and enhanced cell adhesion and migration. Plays a regulatory role in CXCR4-mediated activation of cell surface integrins by CXCL12. Required for heart valve development. Its function is as follows. Atypical chemokine receptor that controls chemokine levels and localization via high-affinity chemokine binding that is uncoupled from classic ligand-driven signal transduction cascades, resulting instead in chemokine sequestration, degradation, or transcytosis. Also known as interceptor (internalizing receptor) or chemokine-scavenging receptor or chemokine decoy receptor. Acts as a receptor for chemokines CXCL11 and CXCL12/SDF1. Chemokine binding does not activate G-protein-mediated signal transduction but instead induces beta-arrestin recruitment, leading to ligand internalization and activation of MAPK signaling pathway. Required for regulation of CXCR4 protein levels in migrating interneurons, thereby adapting their chemokine responsiveness. In glioma cells, transduces signals via MEK/ERK pathway, mediating resistance to apoptosis. Promotes cell growth and survival. Not involved in cell migration, adhesion or proliferation of normal hematopoietic progenitors but activated by CXCL11 in malignant hemapoietic cells, leading to phosphorylation of ERK1/2 (MAPK3/MAPK1) and enhanced cell adhesion and migration. Plays a regulatory role in CXCR4-mediated activation of cell surface integrins by CXCL12. Required for heart valve development. Regulates axon guidance in the oculomotor system through the regulation of CXCL12 levels. The protein is Atypical chemokine receptor 3 of Rattus norvegicus (Rat).